The primary structure comprises 948 residues: Phosphoenolpyruvate carboxylase (948 aa).

Residues His138 and Lys610 contribute to the active site.

Belongs to the PEPCase type 1 family. Mg(2+) serves as cofactor.

It catalyses the reaction oxaloacetate + phosphate = phosphoenolpyruvate + hydrogencarbonate. In terms of biological role, forms oxaloacetate, a four-carbon dicarboxylic acid source for the tricarboxylic acid cycle. The polypeptide is Phosphoenolpyruvate carboxylase (Streptococcus gordonii (strain Challis / ATCC 35105 / BCRC 15272 / CH1 / DL1 / V288)).